The primary structure comprises 154 residues: Myoglobin (154 aa).

One can recognise a Globin domain in the interval 2-148 (VLSDAEWHLV…FRKDIAAKYK (147 aa)). Ser4 carries the post-translational modification Phosphoserine. Residue His65 participates in nitrite binding. His65 provides a ligand contact to O2. A Phosphothreonine modification is found at Thr68. Heme b is bound at residue His94.

This sequence belongs to the globin family. As to quaternary structure, monomeric.

It is found in the cytoplasm. The protein localises to the sarcoplasm. It carries out the reaction Fe(III)-heme b-[protein] + nitric oxide + H2O = Fe(II)-heme b-[protein] + nitrite + 2 H(+). The catalysed reaction is H2O2 + AH2 = A + 2 H2O. Monomeric heme protein which primary function is to store oxygen and facilitate its diffusion within muscle tissues. Reversibly binds oxygen through a pentacoordinated heme iron and enables its timely and efficient release as needed during periods of heightened demand. Depending on the oxidative conditions of tissues and cells, and in addition to its ability to bind oxygen, it also has a nitrite reductase activity whereby it regulates the production of bioactive nitric oxide. Under stress conditions, like hypoxia and anoxia, it also protects cells against reactive oxygen species thanks to its pseudoperoxidase activity. The polypeptide is Myoglobin (MB) (Balaenoptera acutorostrata (Common minke whale)).